Reading from the N-terminus, the 361-residue chain is MKDIFNFGSGPSMLPKIVLKKIKRDLFNWKNTNVSVMEISHRNKNFLKVIENIKNDIKFLLSVSNDYNIILLQGGARAQFSGIPMNLTNNFSDLADYINTGYWGMYAAIEAKKYCSVNIIDVIEKKDKLSILPMKNWNISKNSVYLHYCPNETINGTAIYETPKFKNKIVVADFSSTILSRPIDVNKFDIIYASSQKNIGVSGMTIMIFKKNIFLKQNKFTPSILNYEIIYKNNSLFNTPPTFNWYVSGLVLKWLIDQGGVKKINNINKIKSKLIYDIIDKSKFYKNNIYDEYRSYMNIIFYLPNKKLNNLFLKLSKINGLLFLKGHRAVGGIRASMYNSMTIKGAKKLANFMKYFEKRYG.

Residues Ser-9 and Arg-42 each contribute to the L-glutamate site. Pyridoxal 5'-phosphate-binding positions include 76 to 77, Trp-103, Thr-153, Asp-173, and Gln-196; that span reads AR. Lys-197 carries the N6-(pyridoxal phosphate)lysine modification. Position 238-239 (238-239) interacts with pyridoxal 5'-phosphate; that stretch reads NT.

Belongs to the class-V pyridoxal-phosphate-dependent aminotransferase family. SerC subfamily. As to quaternary structure, homodimer. It depends on pyridoxal 5'-phosphate as a cofactor.

The protein localises to the cytoplasm. The catalysed reaction is O-phospho-L-serine + 2-oxoglutarate = 3-phosphooxypyruvate + L-glutamate. The enzyme catalyses 4-(phosphooxy)-L-threonine + 2-oxoglutarate = (R)-3-hydroxy-2-oxo-4-phosphooxybutanoate + L-glutamate. Its pathway is amino-acid biosynthesis; L-serine biosynthesis; L-serine from 3-phospho-D-glycerate: step 2/3. The protein operates within cofactor biosynthesis; pyridoxine 5'-phosphate biosynthesis; pyridoxine 5'-phosphate from D-erythrose 4-phosphate: step 3/5. In terms of biological role, catalyzes the reversible conversion of 3-phosphohydroxypyruvate to phosphoserine and of 3-hydroxy-2-oxo-4-phosphonooxybutanoate to phosphohydroxythreonine. The polypeptide is Phosphoserine aminotransferase (Wigglesworthia glossinidia brevipalpis).